We begin with the raw amino-acid sequence, 252 residues long: 3-deoxy-manno-octulosonate cytidylyltransferase (252 aa).

This sequence belongs to the KdsB family.

It is found in the cytoplasm. The catalysed reaction is 3-deoxy-alpha-D-manno-oct-2-ulosonate + CTP = CMP-3-deoxy-beta-D-manno-octulosonate + diphosphate. It participates in nucleotide-sugar biosynthesis; CMP-3-deoxy-D-manno-octulosonate biosynthesis; CMP-3-deoxy-D-manno-octulosonate from 3-deoxy-D-manno-octulosonate and CTP: step 1/1. The protein operates within bacterial outer membrane biogenesis; lipopolysaccharide biosynthesis. Its function is as follows. Activates KDO (a required 8-carbon sugar) for incorporation into bacterial lipopolysaccharide in Gram-negative bacteria. In Nitratidesulfovibrio vulgaris (strain ATCC 29579 / DSM 644 / CCUG 34227 / NCIMB 8303 / VKM B-1760 / Hildenborough) (Desulfovibrio vulgaris), this protein is 3-deoxy-manno-octulosonate cytidylyltransferase.